Here is a 306-residue protein sequence, read N- to C-terminus: Extensin (306 aa).

A signal peptide spans 1–32 (MGRIARGSKMSSLIVSLLVVLVSLNLASETTA). Residues 33–306 (KYTYSSPPPP…YTSPPPPHHY (274 aa)) form a disordered region. Composition is skewed to pro residues over residues 38–122 (SPPP…PKHS), 133–152 (SPPP…PKHS), 183–214 (SPPP…PKHS), and 225–290 (SPPP…SPPP).

Hydroxylated on proline residues in the S-P-P-P-P repeat. In terms of processing, O-glycosylated on hydroxyprolines.

The protein localises to the secreted. It localises to the primary cell wall. Structural component in primary cell wall. The sequence is that of Extensin from Daucus carota (Wild carrot).